We begin with the raw amino-acid sequence, 35 residues long: Protein YbgU (35 aa).

In Escherichia coli (strain K12), this protein is Protein YbgU.